A 215-amino-acid chain; its full sequence is Ependymin-1 (215 aa).

The signal sequence occupies residues 1–20; that stretch reads MHTVKLLCVVFSCLCAVAWA. N-linked (GlcNAc...) asparagine glycosylation is found at N71 and N94.

The protein belongs to the ependymin family. In terms of assembly, forms disulfide-linked dimers. In terms of processing, different glycosylation variants are known as EPD-beta and EPD-gamma. Binds calcium through the terminal sialic acids. As to expression, EPDs are synthesized in the meninx and secreted in the cerebrospinal fluid.

Its subcellular location is the secreted. Its function is as follows. May play a role in neural plasticity. May be involved during axon regeneration. The polypeptide is Ependymin-1 (epd1) (Carassius auratus (Goldfish)).